The chain runs to 252 residues: 3-dehydroquinate dehydratase (252 aa).

Residues 46 to 48 (EWR) and Arg82 each bind 3-dehydroquinate. The active-site Proton donor/acceptor is the His143. Lys170 serves as the catalytic Schiff-base intermediate with substrate. Residues Arg212, Ser231, and Gln235 each contribute to the 3-dehydroquinate site.

Belongs to the type-I 3-dehydroquinase family. Homodimer.

The catalysed reaction is 3-dehydroquinate = 3-dehydroshikimate + H2O. It participates in metabolic intermediate biosynthesis; chorismate biosynthesis; chorismate from D-erythrose 4-phosphate and phosphoenolpyruvate: step 3/7. In terms of biological role, involved in the third step of the chorismate pathway, which leads to the biosynthesis of aromatic amino acids. Catalyzes the cis-dehydration of 3-dehydroquinate (DHQ) and introduces the first double bond of the aromatic ring to yield 3-dehydroshikimate. The polypeptide is 3-dehydroquinate dehydratase (Listeria monocytogenes serotype 4b (strain CLIP80459)).